The sequence spans 505 residues: Protein phosphatase 1J (505 aa).

A disordered region spans residues 1–103 (MLNRVRSAVA…PPDTGRRLPW (103 aa)). Residues 27-50 (DLPNAASAPPAAAPEAPRSPPAKA) show a composition bias toward low complexity. Phosphoserine is present on residues serine 66 and serine 76. The 395-residue stretch at 104-498 (STGYAEVINA…DDISVFVIPL (395 aa)) folds into the PPM-type phosphatase domain.

This sequence belongs to the PP2C family. As to quaternary structure, interacts with UBE2I/UBC9.

The catalysed reaction is O-phospho-L-seryl-[protein] + H2O = L-seryl-[protein] + phosphate. It catalyses the reaction O-phospho-L-threonyl-[protein] + H2O = L-threonyl-[protein] + phosphate. This Homo sapiens (Human) protein is Protein phosphatase 1J (PPM1J).